Reading from the N-terminus, the 681-residue chain is Chaperone protein htpG (681 aa).

The segment at 1–326 (MQKGNIGVTT…SPDIPLNVSR (326 aa)) is a; substrate-binding. The segment at 327-545 (SYLQSDSNVK…YMRRMKEMAN (219 aa)) is b. The tract at residues 546-681 (IQAGMSFYGE…NFVKRSIELI (136 aa)) is c. A disordered region spans residues 601-620 (DALKKKQEGKKDEDIPTAEK).

It belongs to the heat shock protein 90 family. In terms of assembly, homodimer.

It localises to the cytoplasm. Functionally, molecular chaperone. Has ATPase activity. The polypeptide is Chaperone protein htpG (Bacteroides fragilis (strain 638R)).